We begin with the raw amino-acid sequence, 420 residues long: Mannose-1-phosphate guanylyltransferase regulatory subunit alpha (420 aa).

Positions 2–251 are substrate-binding domain; it reads LKAVILIGGP…DGIWSQIKSA (250 aa). Residues glutamate 85 and glutamine 247 each contribute to the GDP-alpha-D-mannose site. The segment at 273-420 is hexapeptide repeat domain; that stretch reads LAKHTPGGPW…SRSFTNQIIL (148 aa). Positions 356–384 are C-loop; sequence TPSDPNPNDPRARMDSESLFKDGKLLPAI.

Belongs to the transferase hexapeptide repeat family. In terms of assembly, component of the GMPPA-GMPPB mannose-1-phosphate guanylyltransferase complex composed of 4 GMPPA subunits and 8 GMPPB subunits; the complex is organized into three layers, a central layer made up of 2 GMPPA dimers sandwiched between two layers each made up of 2 GMPPB dimers. In terms of tissue distribution, expressed in fibroblasts (at protein level).

The protein localises to the cytoplasm. Functionally, regulatory subunit of the GMPPA-GMPPB mannose-1-phosphate guanylyltransferase complex; reduces the catalytic activity of GMPPB when part of the complex. Mediates allosteric feedback inhibition of GMPPB catalytic activity upon binding GDP-alpha-D-mannose. Together with GMPPB regulates GDP-alpha-D-mannose levels. This Homo sapiens (Human) protein is Mannose-1-phosphate guanylyltransferase regulatory subunit alpha.